Reading from the N-terminus, the 187-residue chain is Protein GrpE (187 aa).

The interval 1 to 23 (MNNEKELKKEETSVENKEKKVAT) is disordered.

It belongs to the GrpE family. Homodimer.

The protein resides in the cytoplasm. Participates actively in the response to hyperosmotic and heat shock by preventing the aggregation of stress-denatured proteins, in association with DnaK and GrpE. It is the nucleotide exchange factor for DnaK and may function as a thermosensor. Unfolded proteins bind initially to DnaJ; upon interaction with the DnaJ-bound protein, DnaK hydrolyzes its bound ATP, resulting in the formation of a stable complex. GrpE releases ADP from DnaK; ATP binding to DnaK triggers the release of the substrate protein, thus completing the reaction cycle. Several rounds of ATP-dependent interactions between DnaJ, DnaK and GrpE are required for fully efficient folding. In Mesoplasma florum (strain ATCC 33453 / NBRC 100688 / NCTC 11704 / L1) (Acholeplasma florum), this protein is Protein GrpE.